Consider the following 155-residue polypeptide: Altered inheritance rate of mitochondria protein 29 (155 aa).

Residue S78 is modified to Phosphoserine.

The protein belongs to the UPF0538 family.

The protein resides in the cytoplasm. May be involved in mitochondrial organization and biogenesis. This Saccharomyces cerevisiae (strain ATCC 204508 / S288c) (Baker's yeast) protein is Altered inheritance rate of mitochondria protein 29 (AIM29).